The following is a 470-amino-acid chain: A-type ATP synthase subunit B (470 aa).

It belongs to the ATPase alpha/beta chains family. Has multiple subunits with at least A(3), B(3), C, D, E, F, H, I and proteolipid K(x).

It localises to the cell membrane. Its function is as follows. Component of the A-type ATP synthase that produces ATP from ADP in the presence of a proton gradient across the membrane. The B chain is a regulatory subunit. The sequence is that of A-type ATP synthase subunit B from Haloarcula marismortui (strain ATCC 43049 / DSM 3752 / JCM 8966 / VKM B-1809) (Halobacterium marismortui).